A 37-amino-acid chain; its full sequence is MKVRASVRKICEHCRLIRRRRKVMIICFNPKHKQRQG.

Belongs to the bacterial ribosomal protein bL36 family.

It localises to the plastid. It is found in the chloroplast. In Chara vulgaris (Common stonewort), this protein is Large ribosomal subunit protein bL36c.